We begin with the raw amino-acid sequence, 393 residues long: G protein-activated inward rectifier potassium channel 3 (393 aa).

Residues 1-23 are disordered; the sequence is MAQENAAFSPGSEEPPRRRGRQR. Over 1–57 the chain is Cytoplasmic; it reads MAQENAAFSPGSEEPPRRRGRQRYVEKDGRCNVQQGNVRETYRYLTDLFTTLVDLQW. A helical transmembrane segment spans residues 58-82; the sequence is RLSLLFFVLAYALTWLFFGAIWWLI. The Extracellular portion of the chain corresponds to 83–106; the sequence is AYGRGDLEHLEDTAWTPCVNNLNG. The helical; Pore-forming intramembrane region spans 107-118; the sequence is FVAAFLFSIETE. Residues 119-125 constitute an intramembrane region (pore-forming); it reads TTIGYGH. Positions 120–125 match the Selectivity filter motif; it reads TIGYGH. Residues 126–134 are Extracellular-facing; the sequence is RVITDQCPE. The chain crosses the membrane as a helical span at residues 135–156; that stretch reads GIVLLLLQAILGSMVNAFMVGC. Over 157 to 393 the chain is Cytoplasmic; that stretch reads MFVKISQPNK…LPPPESESKV (237 aa). The interval 360-393 is disordered; the sequence is KVEEEGAGEGAGAGDGADKEHNGCLPPPESESKV. Positions 384-393 are enriched in pro residues; it reads LPPPESESKV. The short motif at 390–393 is the PDZ-binding element; the sequence is ESKV.

Belongs to the inward rectifier-type potassium channel (TC 1.A.2.1) family. KCNJ9 subfamily. As to quaternary structure, associates with KCNJ3/GIRK1 to form a G-protein-activated heteromultimer pore-forming unit. Interacts (via PDZ-binding motif) with SNX27 (via PDZ domain); the interaction is required when endocytosed to prevent degradation in lysosomes and promote recycling to the plasma membrane. As to expression, expressed mainly in the brain, some expression in the skeletal muscle.

It localises to the membrane. It catalyses the reaction K(+)(in) = K(+)(out). Functionally, inward rectifier potassium channels are characterized by a greater tendency to allow potassium to flow into the cell rather than out of it. Their voltage dependence is regulated by the concentration of extracellular potassium; as external potassium is raised, the voltage range of the channel opening shifts to more positive voltages. The inward rectification is mainly due to the blockage of outward current by internal magnesium. This receptor is controlled by G proteins. Unable to produce channel activity when expressed alone. Forms a functional channel in association with KCNJ3/GIRK1. The polypeptide is G protein-activated inward rectifier potassium channel 3 (Kcnj9) (Mus musculus (Mouse)).